Here is a 371-residue protein sequence, read N- to C-terminus: Lipoyl synthase, mitochondrial (371 aa).

A mitochondrion-targeting transit peptide spans 1 to 24 (MLSRFKCSRLQLQKRAISVTKATT). Residues 20–29 (TKATTTTASQ) are compositionally biased toward polar residues. Residues 20–42 (TKATTTTASQPKRRRTTTFSDAL) form a disordered region. [4Fe-4S] cluster-binding residues include cysteine 107, cysteine 112, cysteine 118, cysteine 138, cysteine 142, cysteine 145, and serine 353. One can recognise a Radical SAM core domain in the interval 121-342 (GGDSSKATAT…RDKALELGFL (222 aa)).

This sequence belongs to the radical SAM superfamily. Lipoyl synthase family. The cofactor is [4Fe-4S] cluster.

It is found in the mitochondrion. The enzyme catalyses [[Fe-S] cluster scaffold protein carrying a second [4Fe-4S](2+) cluster] + N(6)-octanoyl-L-lysyl-[protein] + 2 oxidized [2Fe-2S]-[ferredoxin] + 2 S-adenosyl-L-methionine + 4 H(+) = [[Fe-S] cluster scaffold protein] + N(6)-[(R)-dihydrolipoyl]-L-lysyl-[protein] + 4 Fe(3+) + 2 hydrogen sulfide + 2 5'-deoxyadenosine + 2 L-methionine + 2 reduced [2Fe-2S]-[ferredoxin]. The protein operates within protein modification; protein lipoylation via endogenous pathway; protein N(6)-(lipoyl)lysine from octanoyl-[acyl-carrier-protein]: step 2/2. Functionally, catalyzes the radical-mediated insertion of two sulfur atoms into the C-6 and C-8 positions of the octanoyl moiety bound to the lipoyl domains of lipoate-dependent enzymes, thereby converting the octanoylated domains into lipoylated derivatives. The protein is Lipoyl synthase, mitochondrial of Lachancea thermotolerans (strain ATCC 56472 / CBS 6340 / NRRL Y-8284) (Yeast).